A 33-amino-acid polypeptide reads, in one-letter code: Sucrose-6-phosphate hydrolase (33 aa).

15-18 (PLQE) provides a ligand contact to substrate. Glu-18 is an active-site residue.

Belongs to the glycosyl hydrolase 32 family.

It catalyses the reaction Hydrolysis of terminal non-reducing beta-D-fructofuranoside residues in beta-D-fructofuranosides.. It participates in glycan biosynthesis; sucrose metabolism. The chain is Sucrose-6-phosphate hydrolase from Fusobacterium mortiferum.